The chain runs to 293 residues: Small ribosomal subunit biogenesis GTPase RsgA (293 aa).

The CP-type G domain occupies 63–223 (KNELVRPPIA…VADTPGFSSL (161 aa)). Residues 112 to 115 (SKMD) and 166 to 174 (GQSGVGKSS) each bind GTP. Residues Cys247, Cys252, His254, and Cys260 each coordinate Zn(2+).

It belongs to the TRAFAC class YlqF/YawG GTPase family. RsgA subfamily. As to quaternary structure, monomer. Associates with 30S ribosomal subunit, binds 16S rRNA. It depends on Zn(2+) as a cofactor.

It localises to the cytoplasm. One of several proteins that assist in the late maturation steps of the functional core of the 30S ribosomal subunit. Helps release RbfA from mature subunits. May play a role in the assembly of ribosomal proteins into the subunit. Circularly permuted GTPase that catalyzes slow GTP hydrolysis, GTPase activity is stimulated by the 30S ribosomal subunit. This is Small ribosomal subunit biogenesis GTPase RsgA from Bacillus anthracis.